Here is a 371-residue protein sequence, read N- to C-terminus: 4-hydroxy-3-methylbut-2-en-1-yl diphosphate synthase (flavodoxin) (371 aa).

[4Fe-4S] cluster is bound by residues C270, C273, C305, and E312.

It belongs to the IspG family. The cofactor is [4Fe-4S] cluster.

It carries out the reaction (2E)-4-hydroxy-3-methylbut-2-enyl diphosphate + oxidized [flavodoxin] + H2O + 2 H(+) = 2-C-methyl-D-erythritol 2,4-cyclic diphosphate + reduced [flavodoxin]. It participates in isoprenoid biosynthesis; isopentenyl diphosphate biosynthesis via DXP pathway; isopentenyl diphosphate from 1-deoxy-D-xylulose 5-phosphate: step 5/6. In terms of biological role, converts 2C-methyl-D-erythritol 2,4-cyclodiphosphate (ME-2,4cPP) into 1-hydroxy-2-methyl-2-(E)-butenyl 4-diphosphate. This chain is 4-hydroxy-3-methylbut-2-en-1-yl diphosphate synthase (flavodoxin), found in Shewanella sp. (strain W3-18-1).